A 113-amino-acid chain; its full sequence is C-C motif chemokine 15 (113 aa).

Positions 1–21 (MKVSVAALSCLMLVAVLGSQA) are cleaved as a signal peptide. Cystine bridges form between cysteine 53/cysteine 77, cysteine 54/cysteine 93, and cysteine 64/cysteine 104.

This sequence belongs to the intercrine beta (chemokine CC) family. In terms of assembly, monomer. The N-terminal is proteolytically cleaved by proteases associated with inflammatory responses. The processed forms CCL15(22-92), CCL15(25-92) and CCL15(29-92) exhibit increase in CCR1-mediated signaling and chemotaxis assays in vitro. In terms of tissue distribution, most abundant in heart, skeletal muscle and adrenal gland. Lower levels in placenta, liver, pancreas and bone marrow. CCL15(22-92), CCL15(25-92) and CCL15(29-92) are found in high levels in synovial fluids from rheumatoid patients.

It localises to the secreted. Its function is as follows. Chemotactic factor that attracts T-cells and monocytes, but not neutrophils, eosinophils, or B-cells. Acts mainly via CC chemokine receptor CCR1. Also binds to CCR3. CCL15(22-92), CCL15(25-92) and CCL15(29-92) are more potent chemoattractants than the CCL15. In Homo sapiens (Human), this protein is C-C motif chemokine 15 (CCL15).